The following is a 1451-amino-acid chain: MVSKRRLSKSEDKESLTEDASKTRKQPLSKKTKKSHIANEVEENDSIFVKLLKISGIILKTGESQNQLAVDQIAFQKKLFQTLRRHPSYPKIIEEFVSGLESYIEDEDSFRNCLLSCERLQDEEASMGASYSKSLIKLLLGIDILQPAIIKTLFEKLPEYFFENKNSDEINIPRLIVSQLKWLDRVVDGKDLTTKIMQLISIAPENLQHDIITSLPEILGDSQHADVGKELSDLLIENTSLTVPILDVLSSLRLDPNFLLKVRQLVMDKLSSIRLEDLPVIIKFILHSVTAMDTLEVISELREKLDLQHCVLPSRLQASQVKLKSKGRASSSGNQESSGQSCIILLFDVIKSAIRYEKTISEAWIKAIENTASVSEHKVFDLVMLFIIYSTNTQTKKYIDRVLRNKIRSGCIQEQLLQSTFSVHYLVLKDMCSSILSLAQSLLHSLDQSIISFGSLLYKYAFKFFDTYCQQEVVGALVTHICSGNEAEVDTALDVLLELVVLNPSAMMMNAVFVKGILDYLDNISPQQIRKLFYVLSTLAFSKQNEASSHIQDDMHLVIRKQLSSTVFKYKLIGIIGAVTMAGIMAADRSESPSLTQERANLSDEQCTQVTSLLQLVHSCSEQSPQASALYYDEFANLIQHEKLDPKALEWVGHTICNDFQDAFVVDSCVVPEGDFPFPVKALYGLEEYDTQDGIAINLLPLLFSQDFAKDGGPVTSQESGQKLVSPLCLAPYFRLLRLCVERQHNGNLEEIDGLLDCPIFLTDLEPGEKLESMSAKERSFMCSLIFLTLNWFREIVNAFCQETSPEMKGKVLTRLKHIVELQIILEKYLAVTPDYVPPLGNFDVETLDITPHTVTAISAKIRKKGKIERKQKTDGSKTSSSDTLSEEKNSECDPTPSHRGQLNKEFTGKEEKTSLLLHNSHAFFRELDIEVFSILHCGLVTKFILDTEMHTEATEVVQLGPPELLFLLEDLSQKLESMLTPPIARRVPFLKNKGSRNIGFSHLQQRSAQEIVHCVFQLLTPMCNHLENIHNYFQCLAAENHGVVDGPGVKVQEYHIMSSCYQRLLQIFHGLFAWSGFSQPENQNLLYSALHVLSSRLKQGEHSQPLEELLSQSVHYLQNFHQSIPSFQCALYLIRLLMVILEKSTASAQNKEKIASLARQFLCRVWPSGDKEKSNISNDQLHALLCIYLEHTESILKAIEEIAGVGVPELINSPKDASSSTFPTLTRHTFVVFFRVMMAELEKTVKKIEPGTAADSQQIHEEKLLYWNMAVRDFSILINLIKVFDSHPVLHVCLKYGRLFVEAFLKQCMPLLDFSFRKHREDVLSLLETFQLDTRLLHHLCGHSKIHQDTRLTQHVPLLKKTLELLVCRVKAMLTLNNCREAFWLGNLKNRDLQGEEIKSQNSQESTADESEDDMSSQASKSKATEDGEEDEVSAGEKEQDSDESYDDSD.

The segment at methionine 1–isoleucine 37 is disordered. The segment at methionine 1 to alanine 291 is interaction with FANCE. Serine 8 is subject to Phosphoserine. Basic and acidic residues predominate over residues serine 8 to lysine 22. A compositionally biased stretch (basic residues) spans threonine 23–histidine 36. The residue at position 222 (serine 222) is a Phosphoserine; by ATM. Residues valine 248–threonine 359 form an interaction with BRCA2 region. Residue lysine 561 forms a Glycyl lysine isopeptide (Lys-Gly) (interchain with G-Cter in ubiquitin) linkage. A phosphoserine mark is found at serine 592, serine 594, and serine 717. The segment at isoleucine 868–glutamate 906 is disordered. Serine 1257 bears the Phosphoserine mark. A disordered region spans residues glycine 1396–aspartate 1451. Residues serine 1401 and serine 1404 each carry the phosphoserine; by ATM modification. A phosphoserine mark is found at serine 1412 and serine 1423. Threonine 1426 carries the phosphothreonine modification. A compositionally biased stretch (acidic residues) spans aspartate 1428–aspartate 1451. Serine 1435 is subject to Phosphoserine.

This sequence belongs to the Fanconi anemia protein FANCD2 family. Homodimer; cannot be ubiquitinated and does not bind DNA. Part of a FANCI-FANCD2 heterodimeric complex that binds and scans dsDNA for DNA damage. Interacts directly with FANCE and FANCI. Interacts with USP1 and MEN1. The ubiquitinated form specifically interacts with BRCA1 and BLM. Both the nonubiquitinated and the monoubiquitinated forms interact with BRCA2; this interaction is mediated by phosphorylated FANCG and the complex also includes XCCR3. The ubiquitinated form specifically interacts with MTMR15/FAN1 (via UBZ-type zinc finger), leading to recruit MTMR15/FAN1 to sites of DNA damage. Interacts with DCLRE1B/Apollo. Interacts with POLN. Interacts with UHRF1 and UHRF2; these interactions promote FANCD2 activation. In terms of processing, monoubiquitinated on Lys-561 during S phase and upon genotoxic stress by FANCL in complex with E2 ligases UBE2T or UBE2W (isoform 1 and isoform 2). Deubiquitinated by USP1 as cells enter G2/M, or once DNA repair is completed. Monoubiquitination requires the joint intervention of the FANC core complex, including FANCA, FANCB, FANCC, FANCE, FANCF, FANCG, and FANCM, and proteins involved in cell cycle checkpoints and DNA repair, including RPA1, ATR, CHEK1 and BRCA1, and is mediated by FANCL/PHF9. Monoubiquitination prevents DNA release from the FANCI-FANCD2 complex. FANCD2 is only ubiquitinated in the FANCI-FANCD2 complex and the monoubiquitination of FANCD2 is promoted by phosphorylation of FANCI. Ubiquitination is required for binding to chromatin, interaction with BRCA1, BRCA2 and MTMR15/FAN1, DNA repair, and normal cell cycle progression, but not for phosphorylation on Ser-222 or interaction with MEN1. Phosphorylated in response to various genotoxic stresses by ATM and/or ATR. Upon ionizing radiation, phosphorylated by ATM on Ser-222 and Ser-1404. Phosphorylation on Ser-222 is required for S-phase checkpoint activation, but not for ubiquitination, foci formation, or DNA repair. In contrast, phosphorylation by ATR on other sites may be required for ubiquitination and foci formation. In terms of tissue distribution, highly expressed in germinal center cells of the spleen, tonsil, and reactive lymph nodes, and in the proliferating basal layer of squamous epithelium of tonsil, esophagus, oropharynx, larynx and cervix. Expressed in cytotrophoblastic cells of the placenta and exocrine cells of the pancreas (at protein level). Highly expressed in testis, where expression is restricted to maturing spermatocytes.

Its subcellular location is the nucleus. Functionally, required for maintenance of chromosomal stability. Promotes accurate and efficient pairing of homologs during meiosis. Involved in the repair of DNA double-strand breaks, both by homologous recombination and single-strand annealing. The FANCI-FANCD2 complex binds and scans double-stranded DNA (dsDNA) for DNA damage; this complex stalls at DNA junctions between double-stranded DNA and single-stranded DNA. May participate in S phase and G2 phase checkpoint activation upon DNA damage. Plays a role in preventing breakage and loss of missegregating chromatin at the end of cell division, particularly after replication stress. Required for the targeting, or stabilization, of BLM to non-centromeric abnormal structures induced by replicative stress. Promotes BRCA2/FANCD1 loading onto damaged chromatin. May also be involved in B-cell immunoglobulin isotype switching. This Homo sapiens (Human) protein is Fanconi anemia group D2 protein (FANCD2).